Consider the following 140-residue polypeptide: Aspartate 1-decarboxylase (140 aa).

Serine 25 acts as the Schiff-base intermediate with substrate; via pyruvic acid in catalysis. A Pyruvic acid (Ser) modification is found at serine 25. Threonine 57 contributes to the substrate binding site. Catalysis depends on tyrosine 58, which acts as the Proton donor. 73 to 75 (GAA) serves as a coordination point for substrate.

The protein belongs to the PanD family. In terms of assembly, heterooctamer of four alpha and four beta subunits. Pyruvate serves as cofactor. Post-translationally, is synthesized initially as an inactive proenzyme, which is activated by self-cleavage at a specific serine bond to produce a beta-subunit with a hydroxyl group at its C-terminus and an alpha-subunit with a pyruvoyl group at its N-terminus.

It is found in the cytoplasm. It catalyses the reaction L-aspartate + H(+) = beta-alanine + CO2. It functions in the pathway cofactor biosynthesis; (R)-pantothenate biosynthesis; beta-alanine from L-aspartate: step 1/1. Catalyzes the pyruvoyl-dependent decarboxylation of aspartate to produce beta-alanine. This chain is Aspartate 1-decarboxylase, found in Persephonella marina (strain DSM 14350 / EX-H1).